The sequence spans 264 residues: MKQYHDLCRHILDQGVVKEDRTGTGTTSVFGYQMRFNLQEGFPLITTKKLHIRSIIHELLWFISGETNVRYLQDNGVRIWNEWADEEGNLGPVYGSQWRSFPRPDGSSVDQLAQVIEQIKTNPDSRRLIVSAWNPGQLEEMALPPCHLLFQFYVADGKLSCQLYQRSADTFLGVPFNIASYALLTHMVAHVTGLEVGDFVHTLGDAHIYHNHLEQVELQLSRDPRPLPKLNIVRDVSSIESFRFEDFEILGYDPHPHIKGEVSV.

Position 21 (arginine 21) interacts with dUMP. Residue histidine 51 participates in (6R)-5,10-methylene-5,6,7,8-tetrahydrofolate binding. 126–127 is a binding site for dUMP; sequence RR. Catalysis depends on cysteine 146, which acts as the Nucleophile. Residues 166–169, asparagine 177, and 207–209 contribute to the dUMP site; these read RSAD and HIY. Residue aspartate 169 coordinates (6R)-5,10-methylene-5,6,7,8-tetrahydrofolate. Serine 263 is a (6R)-5,10-methylene-5,6,7,8-tetrahydrofolate binding site.

This sequence belongs to the thymidylate synthase family. Bacterial-type ThyA subfamily. In terms of assembly, homodimer.

The protein localises to the cytoplasm. It carries out the reaction dUMP + (6R)-5,10-methylene-5,6,7,8-tetrahydrofolate = 7,8-dihydrofolate + dTMP. The protein operates within pyrimidine metabolism; dTTP biosynthesis. In terms of biological role, catalyzes the reductive methylation of 2'-deoxyuridine-5'-monophosphate (dUMP) to 2'-deoxythymidine-5'-monophosphate (dTMP) while utilizing 5,10-methylenetetrahydrofolate (mTHF) as the methyl donor and reductant in the reaction, yielding dihydrofolate (DHF) as a by-product. This enzymatic reaction provides an intracellular de novo source of dTMP, an essential precursor for DNA biosynthesis. This Exiguobacterium sp. (strain ATCC BAA-1283 / AT1b) protein is Thymidylate synthase.